Here is a 187-residue protein sequence, read N- to C-terminus: Protein TIFY 3B (187 aa).

A compositionally biased stretch (basic and acidic residues) spans 1-10; it reads MTKVKDEPRA. A disordered region spans residues 1–50; sequence MTKVKDEPRASVEGGCGVADGDGGAAEIGGTGSVEKSINEVRSTEIQTAE. Residues 14–32 are compositionally biased toward gly residues; sequence GGCGVADGDGGAAEIGGTG. Residues 51–86 enclose the Tify domain; the sequence is PTVPPNQLTIFFGGSVTVFDGLPSEKVQEILRIAAK. Positions 139-163 match the Jas motif; sequence PIARRHSLQRFLEKRRDRLVNKNPY. The short motif at 141-148 is the Nuclear localization signal element; it reads ARRHSLQR. Residues 152–187 are disordered; the sequence is KRRDRLVNKNPYPTSDFKKTDVPTGNVSIKEEFPTA.

The protein belongs to the TIFY/JAZ family. Interacts with MYC2, AFPH2/NINJA, TIFY10A/JAZ1, TIFY10B/JAZ2, TIFY11A/JAZ5, TIFY11B/JAZ6, TIFY5A/JAZ8 and TIFY9/JAZ10. In terms of assembly, (Microbial infection) Interacts with the pathogenic Pseudomonas syringae HopZ1a protein. Post-translationally, (Microbial infection) Acetylated by Pseudomonas syringae HopZ1a. In terms of processing, ubiquitinated. Targeted for degradation by the SCF(COI1) E3 ubiquitin ligase-proteasome pathway during jasmonate signaling.

It localises to the nucleus. Its function is as follows. Repressor of jasmonate responses. The chain is Protein TIFY 3B from Arabidopsis thaliana (Mouse-ear cress).